Here is a 145-residue protein sequence, read N- to C-terminus: uncharacterized protein (145 aa).

This sequence belongs to the asfivirus K145R family.

Its subcellular location is the virion. This is an uncharacterized protein from Ornithodoros (relapsing fever ticks).